Reading from the N-terminus, the 377-residue chain is Succinyl-diaminopimelate desuccinylase (377 aa).

Residue H66 participates in Zn(2+) binding. Residue D68 is part of the active site. Residue D99 participates in Zn(2+) binding. The active-site Proton acceptor is E133. The Zn(2+) site is built by E134, E162, and H348.

The protein belongs to the peptidase M20A family. DapE subfamily. In terms of assembly, homodimer. Zn(2+) is required as a cofactor. The cofactor is Co(2+).

It catalyses the reaction N-succinyl-(2S,6S)-2,6-diaminopimelate + H2O = (2S,6S)-2,6-diaminopimelate + succinate. Its pathway is amino-acid biosynthesis; L-lysine biosynthesis via DAP pathway; LL-2,6-diaminopimelate from (S)-tetrahydrodipicolinate (succinylase route): step 3/3. Catalyzes the hydrolysis of N-succinyl-L,L-diaminopimelic acid (SDAP), forming succinate and LL-2,6-diaminopimelate (DAP), an intermediate involved in the bacterial biosynthesis of lysine and meso-diaminopimelic acid, an essential component of bacterial cell walls. This chain is Succinyl-diaminopimelate desuccinylase, found in Histophilus somni (strain 129Pt) (Haemophilus somnus).